The sequence spans 330 residues: MLPDWKSSLILMAYIIIFLTGLPANLLALRAFVGRIRQPQPAPVHILLLSLTLADLLLLLLLPFKIIEAASNFRWYLPKVVCALTSFGFYSSIYCSTWLLAGISIERYLGVAFPVQYKLSRRPLYGVIAALVAWVMSFGHCTIVIIVQYLNTTEQVRSGNEITCYENFTDNQLDVVLPVRLELCLVLFFIPMAVTIFCYWRFVWIMLSQPLVGAQRRRRAVGLAVVTLLNFLVCFGPYNVSHLVGYHQRKSPWWRSIAVVFSSLNASLDPLLFYFSSSVVRRAFGRGLQVLRNQGSSLLGRRGKDTAEGTNEDRGVGQGEGMPSSDFTTE.

The Extracellular segment spans residues 1 to 12 (MLPDWKSSLILM). The helical transmembrane segment at 13-33 (AYIIIFLTGLPANLLALRAFV) threads the bilayer. Residues 34-41 (GRIRQPQP) lie on the Cytoplasmic side of the membrane. Residues 42-62 (APVHILLLSLTLADLLLLLLL) form a helical membrane-spanning segment. Residues 63 to 84 (PFKIIEAASNFRWYLPKVVCAL) lie on the Extracellular side of the membrane. The chain crosses the membrane as a helical span at residues 85-105 (TSFGFYSSIYCSTWLLAGISI). Topologically, residues 106–126 (ERYLGVAFPVQYKLSRRPLYG) are cytoplasmic. Residues 127-147 (VIAALVAWVMSFGHCTIVIIV) form a helical membrane-spanning segment. Over 148 to 173 (QYLNTTEQVRSGNEITCYENFTDNQL) the chain is Extracellular. 2 N-linked (GlcNAc...) asparagine glycosylation sites follow: N151 and N167. A helical membrane pass occupies residues 174–194 (DVVLPVRLELCLVLFFIPMAV). At 195-219 (TIFCYWRFVWIMLSQPLVGAQRRRR) the chain is on the cytoplasmic side. Residues 220-240 (AVGLAVVTLLNFLVCFGPYNV) form a helical membrane-spanning segment. Over 241–255 (SHLVGYHQRKSPWWR) the chain is Extracellular. A helical transmembrane segment spans residues 256–276 (SIAVVFSSLNASLDPLLFYFS). Residues 277-330 (SSVVRRAFGRGLQVLRNQGSSLLGRRGKDTAEGTNEDRGVGQGEGMPSSDFTTE) lie on the Cytoplasmic side of the membrane. Residues 299 to 330 (LGRRGKDTAEGTNEDRGVGQGEGMPSSDFTTE) form a disordered region. Residues 302-315 (RGKDTAEGTNEDRG) are compositionally biased toward basic and acidic residues.

Belongs to the G-protein coupled receptor 1 family. Interacts with FCN1 (via Fibrinogen C-terminal domain). Expressed at relatively high levels in peripheral blood leukocytes and, to lesser extent, in spleen.

It localises to the cell membrane. In terms of biological role, g protein-coupled receptor that is activated by a major product of dietary fiber digestion, the short chain fatty acids (SCFAs), and that plays a role in the regulation of whole-body energy homeostasis and in intestinal immunity. In omnivorous mammals, the short chain fatty acids acetate, propionate and butyrate are produced primarily by the gut microbiome that metabolizes dietary fibers. SCFAs serve as a source of energy but also act as signaling molecules. That G protein-coupled receptor is probably coupled to the pertussis toxin-sensitive, G(i/o)-alpha family of G proteins but also to the Gq family. Its activation results in the formation of inositol 1,4,5-trisphosphate, the mobilization of intracellular calcium, the phosphorylation of the MAPK3/ERK1 and MAPK1/ERK2 kinases and the inhibition of intracellular cAMP accumulation. May play a role in glucose homeostasis by regulating the secretion of GLP-1, in response to short-chain fatty acids accumulating in the intestine. May also regulate the production of LEP/Leptin, a hormone acting on the central nervous system to inhibit food intake. Finally, may also regulate whole-body energy homeostasis through adipogenesis regulating both differentiation and lipid storage of adipocytes. In parallel to its role in energy homeostasis, may also mediate the activation of the inflammatory and immune responses by SCFA in the intestine, regulating the rapid production of chemokines and cytokines. May also play a role in the resolution of the inflammatory response and control chemotaxis in neutrophils. In addition to SCFAs, may also be activated by the extracellular lectin FCN1 in a process leading to activation of monocytes and inducing the secretion of interleukin-8/IL-8 in response to the presence of microbes. Among SCFAs, the fatty acids containing less than 6 carbons, the most potent activators are probably acetate, propionate and butyrate. Exhibits a SCFA-independent constitutive G protein-coupled receptor activity. The protein is Free fatty acid receptor 2 (FFAR2) of Homo sapiens (Human).